The following is a 592-amino-acid chain: Putative RING finger protein ORF9 (592 aa).

An RING-type zinc finger spans residues 12 to 49; it reads CCICLEEDIERVDTIPCQHTVCRPCYLKPMINKCPVCR. A coiled-coil region spans residues 414 to 441; sequence WELIKREELLQRRYKREEQNLKYTSNRL.

In Ostreid herpesvirus 1 (isolate France) (OsHV-1), this protein is Putative RING finger protein ORF9.